We begin with the raw amino-acid sequence, 305 residues long: GMP synthase [glutamine-hydrolyzing] subunit B (305 aa).

The GMPS ATP-PPase domain occupies 2 to 184 (VNTERFIQQA…LGLPREIQHR (183 aa)). 29–35 (SGGVDSS) contributes to the ATP binding site.

As to quaternary structure, heterodimer composed of a glutamine amidotransferase subunit (A) and a GMP-binding subunit (B).

It carries out the reaction XMP + L-glutamine + ATP + H2O = GMP + L-glutamate + AMP + diphosphate + 2 H(+). The protein operates within purine metabolism; GMP biosynthesis; GMP from XMP (L-Gln route): step 1/1. Its function is as follows. Catalyzes the synthesis of GMP from XMP. The protein is GMP synthase [glutamine-hydrolyzing] subunit B of Methanosphaerula palustris (strain ATCC BAA-1556 / DSM 19958 / E1-9c).